The chain runs to 100 residues: Movement protein TGBp3 (100 aa).

At 1–41 (MQTAPREYSTSGPTAVLAPTTNTQHYAPYSLYRFLSSHKLD) the chain is on the lumenal side. A helical membrane pass occupies residues 42–59 (LLLGIALLVFLYVITAAP). At 60–100 (KEVCQVVITGESVVIRNCQQPDRILANLNLSPWNGVKFPLL) the chain is on the cytoplasmic side.

This sequence belongs to the Tymovirales TGBp3 protein family.

Its subcellular location is the host endoplasmic reticulum membrane. Its function is as follows. Plays a role in viral cell-to-cell propagation, by facilitating genome transport to neighboring plant cells through plasmosdesmata. May induce the formation of granular vesicles derived from the Endoplasmic reticulum, which align on actin filaments. This chain is Movement protein TGBp3, found in Narcissus mosaic virus (NMV).